We begin with the raw amino-acid sequence, 1252 residues long: Elongator complex protein 1 (1252 aa).

A mediates dimerization region spans residues 814-1252; it reads VDVNDLYNVA…MMDWQHEILQ (439 aa). At S1094 the chain carries Phosphoserine. The interval 1097 to 1116 is disordered; the sequence is SSQYSGTSRRTGKTFRSSKN. The segment covering 1106–1116 has biased composition (basic residues); it reads RTGKTFRSSKN. The segment at 1111–1129 is required for binding to tRNA; it reads FRSSKNRRKHERKLFSLKP.

This sequence belongs to the ELP1/IKA1 family. Homodimer. Component of the elongator complex composed of Elp1, Elp2, Elp3, Elp4, Elp5 and Elp6. The elongator complex associates with and stabilizes microtubules; efficient interaction requires the full complex.

It is found in the cytoplasm. It localises to the nucleus. Its subcellular location is the cytoskeleton. The protein resides in the spindle. Its pathway is tRNA modification; 5-methoxycarbonylmethyl-2-thiouridine-tRNA biosynthesis. Component of the elongator complex, which is required for multiple tRNA modifications, including mcm5U (5-methoxycarbonylmethyl uridine), mcm5s2U (5-methoxycarbonylmethyl-2-thiouridine), and ncm5U (5-carbamoylmethyl uridine). The elongator complex catalyzes formation of carboxymethyluridine in the wobble base at position 34 in tRNAs. ELP1 binds to tRNA, mediating interaction of the elongator complex with tRNA. Binding by the elongator complex stabilizes microtubules and promotes their growth. This induces central spindle asymmetry, promoting polarized signaling endosome trafficking during asymmetric cell division and cell fate assignation of sensory organ precursor cells. Involved in protein synthesis-dependent long-term memory formation, probably as part of the elongator complex. This chain is Elongator complex protein 1, found in Drosophila melanogaster (Fruit fly).